The primary structure comprises 189 residues: PTS system glucose-specific EIIA component (189 aa).

The PTS EIIA type-1 domain maps to 31 to 135 (DEAFAEKIVG…SVITPVVIAN (105 aa)). 2 residues coordinate Zn(2+): H68 and H83. The Tele-phosphohistidine intermediate; for EIIA activity role is filled by H83. H83 bears the Phosphohistidine; by HPr mark.

In terms of assembly, heterodimer with glycerol kinase (glpk). The cofactor is Zn(2+).

It is found in the cytoplasm. In terms of biological role, the phosphoenolpyruvate-dependent sugar phosphotransferase system (sugar PTS), a major carbohydrate active transport system, catalyzes the phosphorylation of incoming sugar substrates concomitantly with their translocation across the cell membrane. The enzyme II complex composed of PtsG and Crr is involved in glucose transport. This is PTS system glucose-specific EIIA component (crr) from Borreliella burgdorferi (strain ATCC 35210 / DSM 4680 / CIP 102532 / B31) (Borrelia burgdorferi).